A 235-amino-acid chain; its full sequence is MATSGRLGFTVRSLLNLPEQDAKPRVRREQQTCVPQTAAWLESECSHYLSSDESGLETSPADSSQLASLRRESPGSDPEKRRKRRVLFSKAQTLELERRFRQQRYLSAPEREQLARLLRLTPTQVKIWFQNHRYKLKRGRAPGITEPSDMAASSDLHAAPGLLRRVVVPVLVHDRPPSNNGRGEGTSAVPQDKCSARLATACPVPGYTAFGPGSALGLFPAYQHLAPPALVSWNW.

Residues 51–67 (SDESGLETSPADSSQLA) show a composition bias toward polar residues. The interval 51-86 (SDESGLETSPADSSQLASLRRESPGSDPEKRRKRRV) is disordered. The span at 69-80 (LRRESPGSDPEK) shows a compositional bias: basic and acidic residues. The homeobox DNA-binding region spans 81–140 (RRKRRVLFSKAQTLELERRFRQQRYLSAPEREQLARLLRLTPTQVKIWFQNHRYKLKRGR).

The protein belongs to the NK-2 homeobox family. In terms of tissue distribution, prominent expression in ventral brain and neural tube structures.

It is found in the nucleus. Possible role in the specification of a distinct subset of neurons. The polypeptide is Homeobox protein Nkx-2.8 (Nkx2-8) (Mus musculus (Mouse)).